The primary structure comprises 590 residues: MERTYYCGEVPETAVGERVVLKGWVQKRRDLGGLIFIDLRDRTGIVQVVASPDVSAEALAAAERVRSEYVLSVEGTVVARAPETVNPNIATGSIEIQAERIEIINEAKTPPFSISDDTDAAEDVRLKYRYLDLRRPVMFQTLALRHKITKTVRDFLDSERFLEIETPMLTKSTPEGARDYLVPSRVHPGEFYALPQSPQIFKQLLMVGGVERYYQIARCFRDEDLRADRQPEFTQIDIEMSFIEQKDIMDLTERMMAAVVKAAKGIDIPRPFPRITYDEAMSRYGSDKPDIRFGLELVDVSEIVRNSAFQVFARAVKEGGQVKAINAKGAAPRYSRKDIDALGEFAGRYGAKGLAWLKAEGEELKGPIAKFFTDEEQAALRRALAVEDGDLLLFVADEKAIVAAALGALRLKLGKELGLIDEAKLAFLWVTDWPLLEYDEEEGRYYAAHHPFTMPVRDDIPLLETNPSAVRAQAYDLVLNGYELGGGSLRIFERDVQEKMFRALGFSEEEARRQFGFLLEAFEYGTPPHGGIALGLDRLVMLLAGRTNLRDTIAFPKTASASCLLTEAPGPVSDKQLEELHLAVVLPENE.

An L-aspartate-binding site is contributed by Glu175. Residues Gln199 to Lys202 are aspartate. Position 221 (Arg221) interacts with L-aspartate. Residues Arg221–Glu223 and Gln230 contribute to the ATP site. His449 serves as a coordination point for L-aspartate. Glu483 contacts ATP. Arg490 is an L-aspartate binding site. Gly535 to Arg538 provides a ligand contact to ATP.

Belongs to the class-II aminoacyl-tRNA synthetase family. Type 1 subfamily. As to quaternary structure, homodimer.

Its subcellular location is the cytoplasm. It catalyses the reaction tRNA(Asp) + L-aspartate + ATP = L-aspartyl-tRNA(Asp) + AMP + diphosphate. Functionally, catalyzes the attachment of L-aspartate to tRNA(Asp) in a two-step reaction: L-aspartate is first activated by ATP to form Asp-AMP and then transferred to the acceptor end of tRNA(Asp). The protein is Aspartate--tRNA ligase of Geobacillus kaustophilus (strain HTA426).